The sequence spans 506 residues: Glutamate--tRNA ligase (506 aa).

The 'HIGH' region motif lies at 14–24 (PSPTGYLHIGG). A 'KMSKS' region motif is present at residues 261-265 (KLSKR). K264 serves as a coordination point for ATP.

Belongs to the class-I aminoacyl-tRNA synthetase family. Glutamate--tRNA ligase type 1 subfamily. Monomer.

It localises to the cytoplasm. The enzyme catalyses tRNA(Glu) + L-glutamate + ATP = L-glutamyl-tRNA(Glu) + AMP + diphosphate. In terms of biological role, catalyzes the attachment of glutamate to tRNA(Glu) in a two-step reaction: glutamate is first activated by ATP to form Glu-AMP and then transferred to the acceptor end of tRNA(Glu). This chain is Glutamate--tRNA ligase, found in Roseiflexus sp. (strain RS-1).